Consider the following 592-residue polypeptide: Salivary peroxidase/catechol oxidase (592 aa).

The N-terminal stretch at 1–21 (MWMFLKLLLFVCSSWWSCAQA) is a signal peptide. Residues C24 and C37 are joined by a disulfide bond. N-linked (GlcNAc...) asparagine glycosylation occurs at N25. The active-site Proton acceptor is H110. The Ca(2+) site is built by D111, T187, F189, D191, and S193. N-linked (GlcNAc...) asparagine glycosylation is present at N230. Residues C235 and C244 are joined by a disulfide bond. Position 353 (H353) interacts with heme b. Residue N366 is glycosylated (N-linked (GlcNAc...) asparagine). Intrachain disulfides connect C452-C509 and C553-C580.

Belongs to the peroxidase family. XPO subfamily. As to expression, female salivary gland.

Its subcellular location is the secreted. It catalyses the reaction 2 catechol + O2 = 2 1,2-benzoquinone + 2 H2O. In terms of biological role, inhibits noradrenaline-induced smooth muscle contraction in the host, probably due to the oxidation of noradrenaline, resulting in vasodilation. Exhibits peroxidase activity. This is Salivary peroxidase/catechol oxidase from Anopheles albimanus (New world malaria mosquito).